Reading from the N-terminus, the 147-residue chain is Prefoldin subunit alpha (147 aa).

This sequence belongs to the prefoldin alpha subunit family. In terms of assembly, heterohexamer of two alpha and four beta subunits.

The protein resides in the cytoplasm. Its function is as follows. Molecular chaperone capable of stabilizing a range of proteins. Seems to fulfill an ATP-independent, HSP70-like function in archaeal de novo protein folding. The polypeptide is Prefoldin subunit alpha (Methanocorpusculum labreanum (strain ATCC 43576 / DSM 4855 / Z)).